A 123-amino-acid polypeptide reads, in one-letter code: Small ribosomal subunit protein uS12cz/uS12cy (123 aa).

This sequence belongs to the universal ribosomal protein uS12 family. As to quaternary structure, part of the 30S ribosomal subunit.

The protein localises to the plastid. It is found in the chloroplast. Its function is as follows. With S4 and S5 plays an important role in translational accuracy. Located at the interface of the 30S and 50S subunits. This is Small ribosomal subunit protein uS12cz/uS12cy (rps12-A) from Psilotum nudum (Whisk fern).